Consider the following 380-residue polypeptide: 1-deoxy-D-xylulose 5-phosphate reductoisomerase (380 aa).

The NADPH site is built by T10, G11, S12, I13, G36, R37, N38, and N120. K121 contributes to the 1-deoxy-D-xylulose 5-phosphate binding site. E122 lines the NADPH pocket. D146 is a binding site for Mn(2+). 4 residues coordinate 1-deoxy-D-xylulose 5-phosphate: S147, E148, S172, and H195. Residue E148 coordinates Mn(2+). G201 contributes to the NADPH binding site. 4 residues coordinate 1-deoxy-D-xylulose 5-phosphate: S208, N213, K214, and E217. Residue E217 coordinates Mn(2+).

Belongs to the DXR family. It depends on Mg(2+) as a cofactor. The cofactor is Mn(2+).

It carries out the reaction 2-C-methyl-D-erythritol 4-phosphate + NADP(+) = 1-deoxy-D-xylulose 5-phosphate + NADPH + H(+). Its pathway is isoprenoid biosynthesis; isopentenyl diphosphate biosynthesis via DXP pathway; isopentenyl diphosphate from 1-deoxy-D-xylulose 5-phosphate: step 1/6. Functionally, catalyzes the NADPH-dependent rearrangement and reduction of 1-deoxy-D-xylulose-5-phosphate (DXP) to 2-C-methyl-D-erythritol 4-phosphate (MEP). The protein is 1-deoxy-D-xylulose 5-phosphate reductoisomerase of Listeria innocua serovar 6a (strain ATCC BAA-680 / CLIP 11262).